We begin with the raw amino-acid sequence, 68 residues long: Large ribosomal subunit protein uL29 (68 aa).

It belongs to the universal ribosomal protein uL29 family.

The chain is Large ribosomal subunit protein uL29 (rpl29) from Archaeoglobus fulgidus (strain ATCC 49558 / DSM 4304 / JCM 9628 / NBRC 100126 / VC-16).